The chain runs to 384 residues: N-acetyldiaminopimelate deacetylase (384 aa).

The active site involves Asp-74. The Proton acceptor role is filled by Glu-133.

This sequence belongs to the peptidase M20A family. N-acetyldiaminopimelate deacetylase subfamily.

The catalysed reaction is N-acetyl-(2S,6S)-2,6-diaminopimelate + H2O = (2S,6S)-2,6-diaminopimelate + acetate. It participates in amino-acid biosynthesis; L-lysine biosynthesis via DAP pathway; LL-2,6-diaminopimelate from (S)-tetrahydrodipicolinate (acetylase route): step 3/3. Catalyzes the conversion of N-acetyl-diaminopimelate to diaminopimelate and acetate. In Lactiplantibacillus plantarum (strain ATCC BAA-793 / NCIMB 8826 / WCFS1) (Lactobacillus plantarum), this protein is N-acetyldiaminopimelate deacetylase.